The following is a 321-amino-acid chain: Aspartate carbamoyltransferase catalytic subunit (321 aa).

Carbamoyl phosphate contacts are provided by arginine 60 and threonine 61. Lysine 88 contributes to the L-aspartate binding site. Arginine 110, histidine 138, and glutamine 141 together coordinate carbamoyl phosphate. Residues arginine 171 and arginine 225 each coordinate L-aspartate. 2 residues coordinate carbamoyl phosphate: glycine 266 and proline 267.

Belongs to the aspartate/ornithine carbamoyltransferase superfamily. ATCase family. As to quaternary structure, heterododecamer (2C3:3R2) of six catalytic PyrB chains organized as two trimers (C3), and six regulatory PyrI chains organized as three dimers (R2).

The enzyme catalyses carbamoyl phosphate + L-aspartate = N-carbamoyl-L-aspartate + phosphate + H(+). It participates in pyrimidine metabolism; UMP biosynthesis via de novo pathway; (S)-dihydroorotate from bicarbonate: step 2/3. Catalyzes the condensation of carbamoyl phosphate and aspartate to form carbamoyl aspartate and inorganic phosphate, the committed step in the de novo pyrimidine nucleotide biosynthesis pathway. The sequence is that of Aspartate carbamoyltransferase catalytic subunit from Sorangium cellulosum (strain So ce56) (Polyangium cellulosum (strain So ce56)).